Reading from the N-terminus, the 699-residue chain is Glycine--tRNA ligase beta subunit (699 aa).

This sequence belongs to the class-II aminoacyl-tRNA synthetase family. Tetramer of two alpha and two beta subunits.

The protein localises to the cytoplasm. It carries out the reaction tRNA(Gly) + glycine + ATP = glycyl-tRNA(Gly) + AMP + diphosphate. The chain is Glycine--tRNA ligase beta subunit from Bradyrhizobium diazoefficiens (strain JCM 10833 / BCRC 13528 / IAM 13628 / NBRC 14792 / USDA 110).